A 175-amino-acid polypeptide reads, in one-letter code: MMYMVFLLSVAFVISFIGFSSKPSPIYGGLGLIVGGGVGCGIVMGLGGSFLGLMVFLVYLGGMLVVFGYTTAMATEEYPEAWGSNVVILSALFVGLLVEVAMIVWMIVDGEVGLISCGLKDMEDWVVLGGYGMDVVREDYAGGSALYTYGDWLVILAGWSLFVSIFIVIEITRGR.

The next 5 membrane-spanning stretches (helical) occupy residues 1–21, 26–46, 47–67, 87–107, and 152–172; these read MMYM…GFSS, IYGG…VMGL, GGSF…LVVF, VILS…VWMI, and WLVI…IEIT.

The protein belongs to the complex I subunit 6 family.

It localises to the mitochondrion membrane. It carries out the reaction a ubiquinone + NADH + 5 H(+)(in) = a ubiquinol + NAD(+) + 4 H(+)(out). Its function is as follows. Core subunit of the mitochondrial membrane respiratory chain NADH dehydrogenase (Complex I) that is believed to belong to the minimal assembly required for catalysis. Complex I functions in the transfer of electrons from NADH to the respiratory chain. The immediate electron acceptor for the enzyme is believed to be ubiquinone. This chain is NADH-ubiquinone oxidoreductase chain 6 (MT-ND6), found in Dasypus novemcinctus (Nine-banded armadillo).